The chain runs to 421 residues: L-Ala-D/L-amino acid epimerase (421 aa).

Substrate contacts are provided by residues Thr-193 and 218–220 (KLK). Positions 247, 275, and 304 each coordinate Mg(2+). Substrate-binding positions include Lys-328 and 380–382 (DLD).

This sequence belongs to the mandelate racemase/muconate lactonizing enzyme family. The cofactor is Mg(2+).

Functionally, catalyzes the epimerization of various hydrophobic and polar dipeptides. Has epimerase activity with L-Ala-L-Ala, L-Ala-L-Ser, L-Ala-L-Thr and L-Ala-L-Trp (in vitro). The protein is L-Ala-D/L-amino acid epimerase of Populus trichocarpa (Western balsam poplar).